The primary structure comprises 98 residues: MTREKLSKDAITAALAELGDWSLATDGASIKRSFVFRNFSEAFAFMTRVALAAEKMDHHPDWSNVYKTVDVTLNTHDAGGVTALDIALAKKMNHYFGG.

Belongs to the pterin-4-alpha-carbinolamine dehydratase family.

The enzyme catalyses (4aS,6R)-4a-hydroxy-L-erythro-5,6,7,8-tetrahydrobiopterin = (6R)-L-erythro-6,7-dihydrobiopterin + H2O. This Mesorhizobium japonicum (strain LMG 29417 / CECT 9101 / MAFF 303099) (Mesorhizobium loti (strain MAFF 303099)) protein is Putative pterin-4-alpha-carbinolamine dehydratase.